Consider the following 632-residue polypeptide: Probable potassium transport system protein Kup 1 (632 aa).

12 consecutive transmembrane segments (helical) span residues 17–37 (LFYLALGSVGVVYGDIGTSPL), 60–80 (LISLMIWALTIIVTIKYVLFL), 106–126 (TALLMLLGLMGAALFLGDAMI), 144–164 (PSLAEYIVPISVVILALLFVV), 175–195 (FFGPITAVWFLVMAAAGISHI), 210–230 (AVSFLLHEGFYGVVVLGAVFL), 254–274 (WFLLVFPALTLNYLGQGALVL), 292–312 (ALLPVVILATAATIIASQAVI), 344–364 (IFLPSVNAVLFFGVIFLVLSF), 370–390 (LATAYGISVTGAMVVTSIMAF), 401–421 (LPVAVIALAPLVVLEMIFLGA), and 426–446 (IHDGGYIPILIATAFTVVMWT).

It belongs to the HAK/KUP transporter (TC 2.A.72) family.

The protein localises to the cell inner membrane. The enzyme catalyses K(+)(in) + H(+)(in) = K(+)(out) + H(+)(out). Transport of potassium into the cell. Likely operates as a K(+):H(+) symporter. This is Probable potassium transport system protein Kup 1 from Rhizobium etli (strain ATCC 51251 / DSM 11541 / JCM 21823 / NBRC 15573 / CFN 42).